A 115-amino-acid polypeptide reads, in one-letter code: MDIIKTLEDEQLRENKFDFHVGDTVKVDYLIKEGNKERVQVYEGTVIKMQGTGLRRTFTVRRLAYGVGVERTFLINSPRVTNVRLVREGKVRRSKLFYLRHREGKAAKVKEKQKF.

It belongs to the bacterial ribosomal protein bL19 family.

Functionally, this protein is located at the 30S-50S ribosomal subunit interface and may play a role in the structure and function of the aminoacyl-tRNA binding site. This is Large ribosomal subunit protein bL19 from Finegoldia magna (strain ATCC 29328 / DSM 20472 / WAL 2508) (Peptostreptococcus magnus).